The sequence spans 1974 residues: Protein Ycf2 (1974 aa).

The disordered stretch occupies residues 219–246; sequence SQLKGSSYQSRDHLDSISNEDSEYHNQR. ATP is bound at residue 1308 to 1315; sequence GSIGTGRS.

It belongs to the Ycf2 family.

It localises to the plastid. It is found in the chloroplast stroma. In terms of biological role, probable ATPase of unknown function. Its presence in a non-photosynthetic plant (Epifagus virginiana) and experiments in tobacco indicate that it has an essential function which is probably not related to photosynthesis. The chain is Protein Ycf2 from Jasminum nudiflorum (Winter jasmine).